Consider the following 500-residue polypeptide: Probable cytosol aminopeptidase (500 aa).

2 residues coordinate Mn(2+): lysine 268 and aspartate 273. Lysine 280 is a catalytic residue. Mn(2+)-binding residues include aspartate 291, aspartate 350, and glutamate 352. The active site involves arginine 354.

Belongs to the peptidase M17 family. It depends on Mn(2+) as a cofactor.

Its subcellular location is the cytoplasm. It carries out the reaction Release of an N-terminal amino acid, Xaa-|-Yaa-, in which Xaa is preferably Leu, but may be other amino acids including Pro although not Arg or Lys, and Yaa may be Pro. Amino acid amides and methyl esters are also readily hydrolyzed, but rates on arylamides are exceedingly low.. The catalysed reaction is Release of an N-terminal amino acid, preferentially leucine, but not glutamic or aspartic acids.. Its function is as follows. Presumably involved in the processing and regular turnover of intracellular proteins. Catalyzes the removal of unsubstituted N-terminal amino acids from various peptides. The sequence is that of Probable cytosol aminopeptidase from Azoarcus sp. (strain BH72).